The sequence spans 1415 residues: Non-structural polyprotein 1AB (1415 aa).

The stretch at 104 to 142 forms a coiled coil; it reads KLIHKANALQERLRLSQEEKATLALDVQFLQHENVRLKE. 5 consecutive transmembrane segments (helical) span residues 154-174, 239-259, 286-306, 313-333, and 344-364; these read MKWI…GGYA, VFYY…LAIG, VLPT…TLMV, LLAI…LCFM, and GLIA…LTGT. Active-site charge relay system; for serine protease activity residues include H461, D489, and S551. Positions 587–616 form a coiled coil; sequence VKAPSRVELLKEEIERLKAQLNSAAENPAT. Position 693 is an O-(5'-phospho-RNA)-tyrosine (Y693). The disordered stretch occupies residues 753–813; sequence FDQAKPTPAP…KNEPQPYSQT (61 aa). Residues 783–795 are compositionally biased toward basic and acidic residues; sequence SQKKEKQLEHEQQ. Over residues 800-813 the composition is skewed to polar residues; the sequence is TKPQKNEPQPYSQT. Residues 1160–1286 enclose the RdRp catalytic domain; that stretch reads KHFIEFDWTR…TTPSVPDDYE (127 aa).

This sequence belongs to the astroviridae polyprotein 1AB family. Monomer. In terms of processing, cleaved by the viral and host proteases. The protease is probably autocatalytically cleaved.

The protein resides in the host membrane. The enzyme catalyses RNA(n) + a ribonucleoside 5'-triphosphate = RNA(n+1) + diphosphate. Responsible for the cleavage of the polyprotein into functional products. Functionally, covalently attached to the 5' extremity of the genomic and subgenomic RNAs. It may serve as a primer for the replicase. The chain is Non-structural polyprotein 1AB (ORF1) from Human astrovirus-4 (HAstV-4).